A 273-amino-acid chain; its full sequence is NAD-dependent protein deacylase (273 aa).

One can recognise a Deacetylase sirtuin-type domain in the interval 20–272 (RERLRQRIFF…PEFVEKLLEG (253 aa)). 48–67 (GAGISAESGIRTFRAADGLW) contacts NAD(+). Tyr92 and Arg95 together coordinate substrate. 129–132 (QNID) provides a ligand contact to NAD(+). The Proton acceptor role is filled by His147. 2 residues coordinate Zn(2+): Cys155 and Cys174. Residues 214 to 216 (GTS), 240 to 242 (NLE), and Ala258 each bind NAD(+).

The protein belongs to the sirtuin family. Class III subfamily. It depends on Zn(2+) as a cofactor.

It is found in the cytoplasm. It carries out the reaction N(6)-acetyl-L-lysyl-[protein] + NAD(+) + H2O = 2''-O-acetyl-ADP-D-ribose + nicotinamide + L-lysyl-[protein]. The enzyme catalyses N(6)-succinyl-L-lysyl-[protein] + NAD(+) + H2O = 2''-O-succinyl-ADP-D-ribose + nicotinamide + L-lysyl-[protein]. The catalysed reaction is N(6)-(2-hydroxyisobutanoyl)-L-lysyl-[protein] + NAD(+) + H2O = 2''-O-(2-hydroxyisobutanoyl)-ADP-D-ribose + nicotinamide + L-lysyl-[protein]. NAD-dependent lysine deacetylase that specifically removes acetyl groups on target proteins. Also acts as a protein-lysine deacylase by mediating protein desuccinylation and de-2-hydroxyisobutyrylation. Modulates the activities of several proteins which are inactive in their acylated form. The sequence is that of NAD-dependent protein deacylase from Shigella flexneri.